The sequence spans 147 residues: Deoxyuridine 5'-triphosphate nucleotidohydrolase (147 aa).

Substrate contacts are provided by residues 67-69 (RSG), Asn-80, and 84-86 (TID).

The protein belongs to the dUTPase family. The cofactor is Mg(2+).

It carries out the reaction dUTP + H2O = dUMP + diphosphate + H(+). It functions in the pathway pyrimidine metabolism; dUMP biosynthesis; dUMP from dCTP (dUTP route): step 2/2. This enzyme is involved in nucleotide metabolism: it produces dUMP, the immediate precursor of thymidine nucleotides and it decreases the intracellular concentration of dUTP so that uracil cannot be incorporated into DNA. The polypeptide is Deoxyuridine 5'-triphosphate nucleotidohydrolase (Anaeromyxobacter dehalogenans (strain 2CP-C)).